A 1013-amino-acid chain; its full sequence is Nucleotide-binding oligomerization domain-containing protein 2 (1013 aa).

2 consecutive CARD domains span residues 1–82 and 107–178; these read MCSQ…AVQE and LQSH…HVQK. An ATG16L1-binding motif motif is present at residues 36–50; the sequence is WEVLSWEDYEGLRLV. The ADP site is built by Thr212, Tyr225, Thr226, Gly275, Ser276, Gly277, Lys278, Ser279, and Thr280. Residues 214-247 are required for CARD9 binding; sequence DGAENLCLEDIYTENTLEVRTEVGMAGPLHKSPA. The NACHT domain occupies 266–402; it reads DTVLVVGEAG…RKVLTSRPDA (137 aa). 272 to 279 serves as a coordination point for ATP; that stretch reads GEAGSGKS. Cys368 is lipidated: S-palmitoyl cysteine. Residue His576 coordinates ADP. LRR repeat units lie at residues 764–785, 789–812, 817–838, 845–857, 873–893, 901–922, 929–949, 957–978, and 985–1005; these read RPVA…QLLP, ACKA…IEHA, QLQK…SVAQ, NFLA…NHIT, SLQF…QALA, SLKW…ALAS, ALEE…CSLA, SLKV…ALLQ, and TILE…EALS.

The protein belongs to the NOD1-NOD2 family. Homooligomer: homooligomerizes following muramyl dipeptide (MDP)-binding, promoting RIPK2 recruitment. Interacts (via CARD domain) with RIPK2 (via CARD domain). Following RIPK2 recruitment, RIPK2 homooligomerizes via its CARD domain and forms long filaments named RIPosomes. Interacts (via CARD domain) with ubiquitin; inhibiting interaction with RIPK2. Component of a signaling complex consisting of ARHGEF2, NOD2 and RIPK2. Interacts with ANKRD17 (via N-terminus). Interacts with HSPA1A; the interaction enhances NOD2 stability. Interacts (via both CARD domains) with HSP90; the interaction enhances NOD2 stability. Interacts (via CARD domain) with SOCS3; the interaction promotes NOD2 degradation. Interacts (via CARD domain) with ERBIN; the interaction inhibits activation of NOD2. Interacts with MAPKBP1; the interaction is enhanced in the presence of muramyl dipeptide (MDP) and inhibits NOD2 homooligomerization and activation. Interacts with INAVA; the interaction takes place upon Pattern recognition receptor (PRR) stimulation. Interacts (via NACHT domain) with CARD9. Interacts (via CARD domain) with CASP1; this interaction leads to IL1B processing. Also interacts with CASP4. Interacts with NLRP1; this interaction is enhanced in the presence of muramyl dipeptide (MDP) and leads to increased IL1B release. Interacts with NLRP12; this interaction promotes degradation of NOD2 through the ubiquitin-proteasome pathway. Interacts with ANKHD1, C10orf67, CHMP5, DOCK7, ENTR1, KRT15, LDOC1, PPP1R12C, PPP2R3B, TRIM41 and VIM. Interacts with MAVS; interaction takes place following single-stranded RNA (ssRNA)-binding. Interacts with ATG16L1. Interacts with IRGM; promoting IRGM 'Lys-63'-linked polyubiquitination, which is required for interactions with the core autophagy factors. In terms of processing, palmitoylated by ZDHHC5; palmitoylation is required for proper recruitment to the bacterial entry site and hence for proper signaling upon cognate peptidoglycan detection. Palmitoylation promotes localization to the cell membrane. Palmitoylation protects from SQSTM1/p62-dependent autophagic degradation. Post-translationally, polyubiquitinated by TRIM27, leading to proteasome-mediated degradation. Polyubiquitinated and degraded following muramyl dipeptide (MDP) stimulation, conferring MDP tolerance and preventing septic shock. Degraded via selective autophagy following interaction with IRGM. IRGM promotes NOD2-RIPK2 RIPosome recruitment to autophagosome membranes, promoting their SQSTM1/p62-dependent autophagic degradation. In terms of processing, O-glycosylated by OGT, O-GlcNAcylation increases protein stability.

The protein localises to the cell membrane. The protein resides in the basolateral cell membrane. Its subcellular location is the cytoplasm. It is found in the mitochondrion. Its activity is regulated as follows. ADP-binding promotes an inactive closed conformation. In terms of biological role, pattern recognition receptor (PRR) that detects bacterial peptidoglycan fragments and other danger signals and plays an important role in gastrointestinal immunity. Specifically activated by muramyl dipeptide (MDP), a fragment of bacterial peptidoglycan found in every bacterial peptidoglycan type. NOD2 specifically recognizes and binds 6-O-phospho-MDP, the phosphorylated form of MDP, which is generated by NAGK. 6-O-phospho-MDP-binding triggers oligomerization that facilitates the binding and subsequent activation of the proximal adapter receptor-interacting RIPK2. Following recruitment, RIPK2 undergoes 'Met-1'- (linear) and 'Lys-63'-linked polyubiquitination by E3 ubiquitin-protein ligases XIAP, BIRC2, BIRC3 and the LUBAC complex, becoming a scaffolding protein for downstream effectors, triggering activation of the NF-kappa-B and MAP kinases signaling. This in turn leads to the transcriptional activation of hundreds of genes involved in immune response. Its ability to detect bacterial MDP plays a central role in maintaining the equilibrium between intestinal microbiota and host immune responses to control inflammation. An imbalance in this relationship results in dysbiosis, whereby pathogenic bacteria prevail on commensals, causing damage in the intestinal epithelial barrier as well as allowing bacterial invasion and inflammation. Acts as a regulator of appetite by sensing MDP in a subset of brain neurons: microbiota-derived MDP reach the brain, where they bind and activate NOD2 in inhibitory hypothalamic neurons, decreasing neuronal activity, thereby regulating satiety and body temperature. NOD2-dependent MDP-sensing of bacterial cell walls in the intestinal epithelial compartment contributes to sustained postnatal growth upon undernutrition. Also plays a role in antiviral response by acting as a sensor of single-stranded RNA (ssRNA) from viruses: upon ssRNA-binding, interacts with MAVS, leading to activation of interferon regulatory factor-3/IRF3 and expression of type I interferon. Also acts as a regulator of autophagy in dendritic cells via its interaction with ATG16L1, possibly by recruiting ATG16L1 at the site of bacterial entry. NOD2 activation in the small intestine crypt also contributes to intestinal stem cells survival and function: acts by promoting mitophagy via its association with ATG16L1. In addition to its main role in innate immunity, also regulates the adaptive immune system by acting as regulator of helper T-cell and regulatory T-cells (Tregs). Besides recognizing pathogens, also involved in the endoplasmic reticulum stress response: acts by sensing and binding to the cytosolic metabolite sphingosine-1-phosphate generated in response to endoplasmic reticulum stress, initiating an inflammation process that leads to activation of the NF-kappa-B and MAP kinases signaling. May also be involved in NLRP1 activation following activation by MDP, leading to CASP1 activation and IL1B release in macrophages. The sequence is that of Nucleotide-binding oligomerization domain-containing protein 2 from Oryctolagus cuniculus (Rabbit).